The primary structure comprises 356 residues: Malate dehydrogenase, glyoxysomal (356 aa).

Residues 1-36 (MQPIPDVNQRIARISAHLHPPKYQMEESSVLRRANC) constitute a glyoxysome transit peptide. NAD(+) is bound by residues 51–57 (GAAGGIG) and aspartate 77. Substrate-binding residues include arginine 124 and arginine 130. NAD(+) is bound by residues asparagine 137 and 160–162 (ISN). Asparagine 162 and arginine 196 together coordinate substrate. Histidine 220 (proton acceptor) is an active-site residue. Position 271 (methionine 271) interacts with NAD(+).

The protein belongs to the LDH/MDH superfamily. MDH type 1 family. Homodimer.

It is found in the glyoxysome. The enzyme catalyses (S)-malate + NAD(+) = oxaloacetate + NADH + H(+). The polypeptide is Malate dehydrogenase, glyoxysomal (MDHG) (Cucumis sativus (Cucumber)).